The following is a 425-amino-acid chain: Xylose isomerase (425 aa).

Catalysis depends on residues His-101 and Asp-104. Mg(2+) is bound by residues Glu-232, Glu-268, His-271, Asp-296, Asp-307, Asp-309, and Asp-339.

Belongs to the xylose isomerase family. Homotetramer. The cofactor is Mg(2+).

The protein localises to the cytoplasm. The catalysed reaction is alpha-D-xylose = alpha-D-xylulofuranose. The chain is Xylose isomerase from Salmonella paratyphi A (strain ATCC 9150 / SARB42).